The sequence spans 256 residues: GDSL esterase/lipase At1g18120 (256 aa).

The signal sequence occupies residues 1-49 (MYRVYKNNKFILISIPRITNKLWQKNCNLVILLGVLLVLTLFHDPIIVA). Ser-67 (nucleophile) is an active-site residue. Asn-181 carries an N-linked (GlcNAc...) asparagine glycan.

Belongs to the 'GDSL' lipolytic enzyme family.

The protein resides in the secreted. The sequence is that of GDSL esterase/lipase At1g18120 from Arabidopsis thaliana (Mouse-ear cress).